Reading from the N-terminus, the 399-residue chain is N-acetylglucosamine-6-phosphate deacetylase (399 aa).

Residues H65, H67, and E135 each contribute to the a divalent metal cation site. Residue 146–147 (AH) participates in substrate binding. A divalent metal cation is bound by residues H201 and H222. Substrate-binding positions include 225–226 (NG), R233, and 254–257 (DGHH). D279 contributes to the a divalent metal cation binding site. Residue D279 is the Proton donor/acceptor of the active site. 312-314 (LAG) serves as a coordination point for substrate.

Belongs to the metallo-dependent hydrolases superfamily. NagA family. Homodimer. The cofactor is a divalent metal cation.

The enzyme catalyses N-acetyl-D-glucosamine 6-phosphate + H2O = D-glucosamine 6-phosphate + acetate. It functions in the pathway amino-sugar metabolism; N-acetylneuraminate degradation; D-fructose 6-phosphate from N-acetylneuraminate: step 4/5. Involved in the first committed step in the biosynthesis of amino-sugar-nucleotides. Catalyzes the hydrolysis of the N-acetyl group of N-acetylglucosamine-6-phosphate (GlcNAc-6-P) to yield glucosamine 6-phosphate and acetate. This chain is N-acetylglucosamine-6-phosphate deacetylase (manD), found in Vibrio furnissii.